The following is a 631-amino-acid chain: Chaperone protein DnaK (631 aa).

Threonine 197 is subject to Phosphothreonine; by autocatalysis. Positions 599–631 (AQSDAGAAGSASEENTTSNEKVVDADFEDVEKK) are disordered. Over residues 603–612 (AGAAGSASEE) the composition is skewed to low complexity.

The protein belongs to the heat shock protein 70 family.

In terms of biological role, acts as a chaperone. The polypeptide is Chaperone protein DnaK (Rickettsia bellii (strain RML369-C)).